The chain runs to 889 residues: Cytoplasmic aconitate hydratase (889 aa).

Residues Q86 and D205–H207 each bind substrate. C437, C503, and C506 together coordinate [4Fe-4S] cluster. Substrate is bound by residues R536, R541, R699, and S779–R780.

It belongs to the aconitase/IPM isomerase family. As to quaternary structure, interacts (when associated with the 4Fe-4S) with FBXL5. Interacts with frataxin(81-210). Requires [4Fe-4S] cluster as cofactor.

It localises to the cytoplasm. It is found in the cytosol. It carries out the reaction citrate = D-threo-isocitrate. Bifunctional iron sensor that switches between 2 activities depending on iron availability. Iron deprivation, promotes its mRNA binding activity through which it regulates the expression of genes involved in iron uptake, sequestration and utilization. Binds to iron-responsive elements (IRES) in the untranslated region of target mRNAs preventing for instance the translation of ferritin and aminolevulinic acid synthase and stabilizing the transferrin receptor mRNA. Its function is as follows. Conversely, when cellular iron levels are high, binds a 4Fe-4S cluster which precludes RNA binding activity and promotes the aconitase activity, the isomerization of citrate to isocitrate via cis-aconitate. The sequence is that of Cytoplasmic aconitate hydratase (Aco1) from Mus musculus (Mouse).